Here is a 2480-residue protein sequence, read N- to C-terminus: Polyprotein P1234 (2480 aa).

One can recognise an Alphavirus-like MT domain in the interval 27-257 (ESQQVTPNDH…ESRRLLKSWH (231 aa)). The tract at residues 242-261 (GXTLYIESRRLLKSWHLPSV) is nsP1 membrane-binding. 2 S-palmitoyl cysteine; by host lipidation sites follow: C415 and C417. The tract at residues 480-506 (YSGDRNEAREAEKEAEETKEAELTREA) is disordered. The span at 483-504 (DRNEAREAEKEAEETKEAELTR) shows a compositional bias: basic and acidic residues. In terms of domain architecture, (+)RNA virus helicase ATP-binding spans 688–840 (DLINPPFHEF…HDICTQVLHK (153 aa)). 719–726 (GVPGSGKS) contributes to the a ribonucleoside 5'-triphosphate binding site. Residues 841–989 (SISRRCTLPI…LEEWQEEHDN (149 aa)) form the (+)RNA virus helicase C-terminal domain. The Peptidase C9 domain occupies 1002–1324 (DPFQNKAKVC…QRLSSMFACN (323 aa)). Residues 1003–1022 (PFQNKAKVCWAKCLVQVLET) form a nucleolus localization signal region. Residue C1011 is the For cysteine protease nsP2 activity of the active site. The short motif at 1055–1064 (TKYYGVDLDS) is the Nuclear export signal element. H1080 (for cysteine protease nsP2 activity) is an active-site residue. The Nuclear localization signal signature appears at 1179-1183 (PHKRV). The region spanning 1332–1491 (APSYRVRRTD…KIQEAIDRRT (160 aa)) is the Macro domain. The ADP-D-ribose site is built by D1341, N1355, G1363, G1443, V1444, and F1445. Zn(2+)-binding residues include C1593, C1595, C1618, and C1636. T1675 is modified (phosphothreonine; by host). Short sequence motifs (FGDF; binding to host G3BP1) lie at residues 1843–1846 (FGDF) and 1854–1857 (FGDI). A RdRp catalytic domain is found at 2234–2349 (DAVLETDIAS…HGVRSDPLMA (116 aa)).

Interacts with non-structural protein 3. Interacts with RNA-directed RNA polymerase nsP4. Interacts with protease nsP2. interacts with itself. In terms of assembly, interacts with mRNA-capping enzyme nsP1. Interacts with host DDX1. Interacts with host DDX3. Interacts (via C-terminus) with host G3BP1; this interaction inhibits the formation of host stress granules on viral mRNAs and the nsp3-G3BP1 complexes bind viral RNAs and probably orchestrate the assembly of viral replication complexes. Interacts (via C-terminus) with host G3BP2; this interaction inhibits the formation of host stress granules on viral mRNAs and the nsp3-G3BP2 complexes bind viral RNAs and probably orchestrate the assembly of viral replication complexes. As to quaternary structure, interacts with mRNA-capping enzyme nsP1. Interacts with protease nsP2. interacts with itself. Interacts with RNA-directed RNA polymerase nsP4. Interacts with mRNA-capping enzyme nsP1. Interacts with KPNA1/karyopherin-alpha1; this interaction probably allows the active transport of protease nsP2 into the host nucleus. Mg(2+) serves as cofactor. The cofactor is Mn(2+). In terms of processing, specific enzymatic cleavages in vivo yield mature proteins. The processing of the polyprotein is temporally regulated. In early stages (1.7 hpi), P1234 is first cleaved in trans through its nsP2 protease activity, releasing P123' and nsP4, which associate to form the early replication complex. At the same time, P1234 is also cut at the nsP1/nsP2 site early in infection but with lower efficiency. After replication of the viral minus-strand RNAs (4 hpi), the polyproteins are cut at the nsP1/nsP2 and nsP2/nsP3 sites very efficiently, preventing accumulation of P123' and P1234 and allowing the formation of the late replication complex. NsP3'/nsP4 site is not cleaved anymore and P34 is produced rather than nsP4. Post-translationally, specific enzymatic cleavages in vivo yield mature proteins. The processing of the polyprotein is temporally regulated. In early stages (1.7 hpi), P123 is cleaved at the nsP1/nsP2 site with low efficiency. After replication of the viral minus-strand RNAs (4 hpi), the polyproteins are cut at the nsP1/nsP2 and nsP2/nsP3 sites very efficiently, preventing accumulation of P123 and allowing the formation of the late replication complex. Specific enzymatic cleavages in vivo yield mature proteins. The processing of the polyprotein is temporally regulated. In early stages (1.7 hpi), P123' is cleaved at the nsP1/nsP2 site with low efficiency. After replication of the viral minus-strand RNAs (4 hpi), the polyproteins are cut at the nsP1/nsP2 and nsP2/nsP3 sites very efficiently, preventing accumulation of P123' and allowing the formation of the late replication complex. In terms of processing, palmitoylated by host palmitoyltransferases ZDHHC2 and ZDHHC19. Post-translationally, phosphorylated by host on serines and threonines. Ubiquitinated; targets the protein for rapid degradation via the ubiquitin system. Nsp4 is present in extremely low quantities due to low frequency of translation through the amber stop-codon and the degradation by the ubiquitin pathway.

It localises to the host cytoplasmic vesicle membrane. Its subcellular location is the host cell membrane. The protein resides in the host cell projection. It is found in the host filopodium. The protein localises to the host nucleus. It localises to the host cytoplasm. The enzyme catalyses GTP + S-adenosyl-L-methionine = N(7)-methyl-GTP + S-adenosyl-L-homocysteine. The catalysed reaction is N(7)-methyl-GTP + L-histidyl-[protein] = N(tele)-(N(7)-methylguanosine 5'-phospho)-L-histidyl-[protein] + diphosphate. It catalyses the reaction N(tele)-(N(7)-methylguanosine 5'-phospho)-L-histidyl-[protein] + a 5'-end diphospho-(purine-ribonucleoside) in mRNA + H(+) = a 5'-end (N(7)-methyl 5'-triphosphoguanosine)-(purine-ribonucleoside) in mRNA + L-histidyl-[protein]. It carries out the reaction a 5'-end triphospho-ribonucleoside in mRNA + H2O = a 5'-end diphospho-ribonucleoside in mRNA + phosphate + H(+). The enzyme catalyses a ribonucleoside 5'-triphosphate + H2O = a ribonucleoside 5'-diphosphate + phosphate + H(+). The catalysed reaction is ATP + H2O = ADP + phosphate + H(+). It catalyses the reaction RNA(n) + a ribonucleoside 5'-triphosphate = RNA(n+1) + diphosphate. It carries out the reaction 4-O-(ADP-D-ribosyl)-L-aspartyl-[protein] + H2O = L-aspartyl-[protein] + ADP-D-ribose + H(+). The enzyme catalyses 5-O-(ADP-D-ribosyl)-L-glutamyl-[protein] + H2O = L-glutamyl-[protein] + ADP-D-ribose + H(+). The catalysed reaction is RNA(n) + ATP = RNA(n)-3'-adenine ribonucleotide + diphosphate. It catalyses the reaction ADP-alpha-D-ribose 1''-phosphate + H2O = ADP-D-ribose + phosphate. In terms of biological role, inactive precursor of the viral replicase, which is activated by cleavages carried out by the viral protease nsP2. The early replication complex formed by the polyprotein P123 and nsP4 synthesizes minus-strand RNAs. As soon P123 is cleaved into mature proteins, the plus-strand RNAs synthesis begins. Functionally, the early replication complex formed by the polyprotein P123' and nsP4 synthesizes minus-strand RNAs. Polyprotein P123' is a short-lived polyprotein that accumulates during early stage of infection. As soon P123' is cleaved into mature proteins, the plus-strand RNAs synthesis begins. Its function is as follows. Cytoplasmic capping enzyme that catalyzes two virus-specific reactions: methyltransferase and nsP1 guanylyltransferase. mRNA-capping is necessary since all viral RNAs are synthesized in the cytoplasm, and host capping enzymes are restricted to the nucleus. The enzymatic reaction involves a covalent link between 7-methyl-GMP and nsP1, whereas eukaryotic capping enzymes form a covalent complex only with GMP. nsP1 capping consists in the following reactions: GTP is first methylated into 7-methyl-GMP and then is covalently linked to nsP1 to form the m7GMp-nsP1 complex from which 7-methyl-GMP complex is transferred to the mRNA to create the cap structure. NsP1 is also needed for the initiation of the minus-strand RNAs synthesis. Probably serves as a membrane anchor for the replication complex composed of nsP1-nsP4. Palmitoylated nsP1 is remodeling host cell cytoskeleton, and induces filopodium-like structure formation at the surface of the host cell. In terms of biological role, multifunctional protein whose N-terminus is part of the RNA polymerase complex and displays NTPase, RNA triphosphatase and helicase activities. NTPase and RNA triphosphatase are involved in viral RNA capping and helicase keeps a check on the dsRNA replication intermediates. The C-terminus harbors a protease that specifically cleaves the polyproteins and releases the mature proteins. Required for the shutoff of minus-strand RNAs synthesis. Specifically inhibits the host IFN response by promoting the nuclear export of host STAT1. Also inhibits host transcription by inducing the rapid proteasome-dependent degradation of POLR2A, a catalytic subunit of the RNAPII complex. The resulting inhibition of cellular protein synthesis serves to ensure maximal viral gene expression and to evade host immune response. Seems to be essential for minus-strand RNAs and subgenomic 26S mRNAs synthesis. Displays mono-ADP-ribosylhydrolase activity. ADP-ribosylation is a post-translational modification that controls various processes of the host cell and the virus probably needs to revert it for optimal viral replication. Binds proteins of FXR family and sequesters them into the viral RNA replication complexes thereby inhibiting the formation of host stress granules on viral mRNAs. The nsp3'-FXR complexes bind viral RNAs and probably orchestrate the assembly of viral replication complexes, thanks to the ability of FXR family members to self-assemble and bind DNA. Functionally, seems to be essential for minus-strand RNAs and subgenomic 26S mRNAs synthesis. Displays mono-ADP-ribosylhydrolase activity. ADP-ribosylation is a post-translational modification that controls various processes of the host cell and the virus probably needs to revert it for optimal viral replication. Binds proteins of G3BP family and sequesters them into the viral RNA replication complexes thereby inhibiting the formation of host stress granules on viral mRNAs. The nsp3-G3BP complexes bind viral RNAs and probably orchestrate the assembly of viral replication complexes, thanks to the ability of G3BP family members to self-assemble and bind DNA. Its function is as follows. RNA dependent RNA polymerase. Replicates genomic and antigenomic RNA by recognizing replications specific signals. The early replication complex formed by the polyprotein P123 and nsP4 synthesizes minus-strand RNAs. The late replication complex composed of fully processed nsP1-nsP4 is responsible for the production of genomic and subgenomic plus-strand RNAs. The polypeptide is Polyprotein P1234 (Aedes (Common banded mosquito)).